The primary structure comprises 392 residues: Chalcone synthase 1 (392 aa).

Cys167 is a catalytic residue.

The protein belongs to the thiolase-like superfamily. Chalcone/stilbene synthases family.

It catalyses the reaction (E)-4-coumaroyl-CoA + 3 malonyl-CoA + 3 H(+) = 2',4,4',6'-tetrahydroxychalcone + 3 CO2 + 4 CoA. It functions in the pathway secondary metabolite biosynthesis; flavonoid biosynthesis. Functionally, the primary product of this enzyme is 4,2',4',6'-tetrahydroxychalcone (also termed naringenin-chalcone or chalcone) which can under specific conditions spontaneously isomerize into naringenin. The sequence is that of Chalcone synthase 1 (CHS1) from Secale cereale (Rye).